The chain runs to 557 residues: Protein NRT1/ PTR FAMILY 5.14 (557 aa).

Transmembrane regions (helical) follow at residues 35–55 (AALFIIGVEVAERFAYYGIGS) and 78–98 (AWSGIATLLPVLGAFVADAFL). Threonine 103 carries the post-translational modification Phosphothreonine. A run of 10 helical transmembrane segments spans residues 104–124 (IIISSLIYVLGLAFLTLSAFL), 133–153 (SSTSSFLNVLFFFSLYLVAIG), 183–203 (FFNWWYLSLSAGICFAILVVV), 209–229 (FSWAFGFGIPCVFMVISLVLF), 320–340 (IPVWFTTLAYAIPYAQYMTFF), 357–377 (IPPASLQVFIGISIVLFVPIY), 401–421 (IGTGIVLSTITMVIAALVEFK), 443–463 (IWWLIPQYLLLGLADVYTLVG), 479–499 (IGLALYLSALGVGSLLSSLLI), and 526–546 (YFYWLLAIVSAVGFFTFLFIS).

Belongs to the major facilitator superfamily. Proton-dependent oligopeptide transporter (POT/PTR) (TC 2.A.17) family. In terms of tissue distribution, expressed in roots.

It is found in the membrane. The protein is Protein NRT1/ PTR FAMILY 5.14 (NPF5.14) of Arabidopsis thaliana (Mouse-ear cress).